Reading from the N-terminus, the 200-residue chain is Dephospho-CoA kinase (200 aa).

The DPCK domain occupies 3–200 (IIGLTGGIGS…LWQRFATQVE (198 aa)). Position 11-16 (11-16 (GSGKST)) interacts with ATP.

This sequence belongs to the CoaE family.

Its subcellular location is the cytoplasm. It catalyses the reaction 3'-dephospho-CoA + ATP = ADP + CoA + H(+). The protein operates within cofactor biosynthesis; coenzyme A biosynthesis; CoA from (R)-pantothenate: step 5/5. Its function is as follows. Catalyzes the phosphorylation of the 3'-hydroxyl group of dephosphocoenzyme A to form coenzyme A. This is Dephospho-CoA kinase from Corynebacterium diphtheriae (strain ATCC 700971 / NCTC 13129 / Biotype gravis).